We begin with the raw amino-acid sequence, 240 residues long: Enolase-phosphatase E1 (240 aa).

It belongs to the HAD-like hydrolase superfamily. MasA/MtnC family. As to quaternary structure, monomer. Mg(2+) serves as cofactor.

The catalysed reaction is 5-methylsulfanyl-2,3-dioxopentyl phosphate + H2O = 1,2-dihydroxy-5-(methylsulfanyl)pent-1-en-3-one + phosphate. Its pathway is amino-acid biosynthesis; L-methionine biosynthesis via salvage pathway; L-methionine from S-methyl-5-thio-alpha-D-ribose 1-phosphate: step 3/6. The protein operates within amino-acid biosynthesis; L-methionine biosynthesis via salvage pathway; L-methionine from S-methyl-5-thio-alpha-D-ribose 1-phosphate: step 4/6. Functionally, bifunctional enzyme that catalyzes the enolization of 2,3-diketo-5-methylthiopentyl-1-phosphate (DK-MTP-1-P) into the intermediate 2-hydroxy-3-keto-5-methylthiopentenyl-1-phosphate (HK-MTPenyl-1-P), which is then dephosphorylated to form the acireductone 1,2-dihydroxy-3-keto-5-methylthiopentene (DHK-MTPene). This Saccharopolyspora erythraea (strain ATCC 11635 / DSM 40517 / JCM 4748 / NBRC 13426 / NCIMB 8594 / NRRL 2338) protein is Enolase-phosphatase E1.